The primary structure comprises 464 residues: MAGGAVMTSTPTKPTVAFAHLGCEKNRVDTEHMVGLLAQAGYGVSTNENDAAVVVVNTCSFIQDAREESVRTLVGLAEQGKELIIAGCLAQHFQDELLESIPEAKAIVGTGDYQHIVEVLQRVEAGERVNRVSAVPTFVGDEHLPRQRTTDQAVAFLKVAEGCDYRCAFCIIPKLRGDQRSRPIESIVAEAHQLVEQGVQELILISQITTNYGLDLYGKPKLAELLRALGEVEIPWIRVHYAYPTGLTPEVLAAYREVPNVVPYLDLPLQHSHPEVLRAMNRPWQADVNDRLLDQIRDQLPDAVLRTTLIVGFPGETEEHFQHLMEFLRRQRFDHVGVFTFSPEDGTAAAELPNPVDPDVAQARKDALMALQQPISAERNHSWVSRTVDVLIEQHNPQTGQMIGRCARFAPEVDGEVHVQPGEDGQKAAPGTMVPVQITGADVYDLSGRIVGARDMVAAIRADA.

The region spanning 14–125 is the MTTase N-terminal domain; the sequence is PTVAFAHLGC…IVEVLQRVEA (112 aa). [4Fe-4S] cluster is bound by residues C23, C59, C88, C163, C167, and C170. One can recognise a Radical SAM core domain in the interval 149-378; it reads TTDQAVAFLK…MALQQPISAE (230 aa). One can recognise a TRAM domain in the interval 381–452; it reads HSWVSRTVDV…VYDLSGRIVG (72 aa).

It belongs to the methylthiotransferase family. RimO subfamily. Requires [4Fe-4S] cluster as cofactor.

Its subcellular location is the cytoplasm. The catalysed reaction is L-aspartate(89)-[ribosomal protein uS12]-hydrogen + (sulfur carrier)-SH + AH2 + 2 S-adenosyl-L-methionine = 3-methylsulfanyl-L-aspartate(89)-[ribosomal protein uS12]-hydrogen + (sulfur carrier)-H + 5'-deoxyadenosine + L-methionine + A + S-adenosyl-L-homocysteine + 2 H(+). Functionally, catalyzes the methylthiolation of an aspartic acid residue of ribosomal protein uS12. This chain is Ribosomal protein uS12 methylthiotransferase RimO, found in Parasynechococcus marenigrum (strain WH8102).